The chain runs to 536 residues: Putative beta-xylosidase (536 aa).

Catalysis depends on D14, which acts as the Proton acceptor. The active-site Proton donor is E186.

This sequence belongs to the glycosyl hydrolase 43 family.

It carries out the reaction Hydrolysis of (1-&gt;4)-beta-D-xylans, to remove successive D-xylose residues from the non-reducing termini.. This is Putative beta-xylosidase (yagH) from Escherichia coli (strain K12).